The following is a 531-amino-acid chain: Peptide chain release factor 3 (531 aa).

In terms of domain architecture, tr-type G spans 10–278 (RRRRTFAIIS…SLIDWAPAPK (269 aa)). Residues 19-26 (SHPDAGKT), 87-91 (DTPGH), and 141-144 (NKYD) each bind GTP.

This sequence belongs to the TRAFAC class translation factor GTPase superfamily. Classic translation factor GTPase family. PrfC subfamily.

The protein localises to the cytoplasm. Increases the formation of ribosomal termination complexes and stimulates activities of RF-1 and RF-2. It binds guanine nucleotides and has strong preference for UGA stop codons. It may interact directly with the ribosome. The stimulation of RF-1 and RF-2 is significantly reduced by GTP and GDP, but not by GMP. The polypeptide is Peptide chain release factor 3 (Neisseria gonorrhoeae (strain ATCC 700825 / FA 1090)).